Consider the following 177-residue polypeptide: Small ribosomal subunit protein uS5 (177 aa).

Positions L14 to I77 constitute an S5 DRBM domain.

This sequence belongs to the universal ribosomal protein uS5 family. In terms of assembly, part of the 30S ribosomal subunit. Contacts proteins S4 and S8.

With S4 and S12 plays an important role in translational accuracy. Functionally, located at the back of the 30S subunit body where it stabilizes the conformation of the head with respect to the body. This is Small ribosomal subunit protein uS5 from Blochmanniella floridana.